A 402-amino-acid polypeptide reads, in one-letter code: Phosphoglycerate kinase (402 aa).

Substrate contacts are provided by residues Asp-24–Asn-26, Arg-41, His-64–Arg-67, Arg-123, and Arg-156. Residues Lys-207, Gly-298, Glu-329, and Gly-358–Ser-361 contribute to the ATP site.

This sequence belongs to the phosphoglycerate kinase family. As to quaternary structure, monomer.

It is found in the cytoplasm. It carries out the reaction (2R)-3-phosphoglycerate + ATP = (2R)-3-phospho-glyceroyl phosphate + ADP. It functions in the pathway carbohydrate degradation; glycolysis; pyruvate from D-glyceraldehyde 3-phosphate: step 2/5. In Microcystis aeruginosa (strain NIES-843 / IAM M-2473), this protein is Phosphoglycerate kinase.